Reading from the N-terminus, the 103-residue chain is MQNQQIRIRLKAFDHRLIDQSTQEIVETAKRTGAQVRGPIPLPTRKERYTVLISPHVNKDARDQYEIRTHKRVLDIVQPTDKTVDALMKLDLAAGVEVQISLG.

This sequence belongs to the universal ribosomal protein uS10 family. As to quaternary structure, part of the 30S ribosomal subunit.

Involved in the binding of tRNA to the ribosomes. The chain is Small ribosomal subunit protein uS10 from Azotobacter vinelandii (strain DJ / ATCC BAA-1303).